A 199-amino-acid polypeptide reads, in one-letter code: Peptidyl-tRNA hydrolase (199 aa).

Residue Tyr-15 coordinates tRNA. His-20 serves as the catalytic Proton acceptor. The tRNA site is built by Tyr-66, Asn-68, and Asn-114.

The protein belongs to the PTH family. As to quaternary structure, monomer.

It is found in the cytoplasm. The enzyme catalyses an N-acyl-L-alpha-aminoacyl-tRNA + H2O = an N-acyl-L-amino acid + a tRNA + H(+). Its function is as follows. Hydrolyzes ribosome-free peptidyl-tRNAs (with 1 or more amino acids incorporated), which drop off the ribosome during protein synthesis, or as a result of ribosome stalling. In terms of biological role, catalyzes the release of premature peptidyl moieties from peptidyl-tRNA molecules trapped in stalled 50S ribosomal subunits, and thus maintains levels of free tRNAs and 50S ribosomes. The polypeptide is Peptidyl-tRNA hydrolase (Burkholderia cenocepacia (strain ATCC BAA-245 / DSM 16553 / LMG 16656 / NCTC 13227 / J2315 / CF5610) (Burkholderia cepacia (strain J2315))).